The sequence spans 545 residues: Chaperonin GroEL 1 (545 aa).

Residues 29–32 (TLGP), 86–90 (DGTTT), Gly-413, 479–481 (DAA), and Asp-495 contribute to the ATP site. Residues 525–545 (PEPKENNPAGSGAGMGGDFDY) are disordered. A compositionally biased stretch (gly residues) spans 535–545 (SGAGMGGDFDY).

This sequence belongs to the chaperonin (HSP60) family. As to quaternary structure, forms a cylinder of 14 subunits composed of two heptameric rings stacked back-to-back. Interacts with the co-chaperonin GroES.

Its subcellular location is the cytoplasm. The enzyme catalyses ATP + H2O + a folded polypeptide = ADP + phosphate + an unfolded polypeptide.. Its function is as follows. Together with its co-chaperonin GroES, plays an essential role in assisting protein folding. The GroEL-GroES system forms a nano-cage that allows encapsulation of the non-native substrate proteins and provides a physical environment optimized to promote and accelerate protein folding. The protein is Chaperonin GroEL 1 of Thermosynechococcus vestitus (strain NIES-2133 / IAM M-273 / BP-1).